Here is a 140-residue protein sequence, read N- to C-terminus: Nucleoside diphosphate kinase (140 aa).

ATP contacts are provided by K11, F59, R87, T93, R104, and N114. H117 serves as the catalytic Pros-phosphohistidine intermediate.

It belongs to the NDK family. As to quaternary structure, homotetramer. It depends on Mg(2+) as a cofactor.

Its subcellular location is the cytoplasm. The catalysed reaction is a 2'-deoxyribonucleoside 5'-diphosphate + ATP = a 2'-deoxyribonucleoside 5'-triphosphate + ADP. It catalyses the reaction a ribonucleoside 5'-diphosphate + ATP = a ribonucleoside 5'-triphosphate + ADP. Its function is as follows. Major role in the synthesis of nucleoside triphosphates other than ATP. The ATP gamma phosphate is transferred to the NDP beta phosphate via a ping-pong mechanism, using a phosphorylated active-site intermediate. This chain is Nucleoside diphosphate kinase, found in Erythrobacter litoralis (strain HTCC2594).